Reading from the N-terminus, the 1131-residue chain is Homeobox-DDT domain protein RLT3 (1131 aa).

A DNA-binding region (homeobox; TALE-type) is located at residues 2–56 (KRKSPLQVQALEGFYLEQMYPTPKEMEDLGKSLGLTLKEVRGWFKRRRSRGKGVK). Positions 239–251 (LQKRSTEKKRRSI) are enriched in basic residues. A disordered region spans residues 239–264 (LQKRSTEKKRRSIHREAELNKDETQR). Residues 252-264 (HREAELNKDETQR) show a composition bias toward basic and acidic residues. One can recognise a DDT domain in the interval 365 to 424 (PESVKKLFKVVHFLYTYSVTLDIGPFTLDEFTRAFHDKDSLLLGKIHLSLLKLLLLDVET). Residues 579–609 (EDPDKSQSDSDDSGSVDDESDDCSISSGDEI) are disordered. Over residues 587–600 (DSDDSGSVDDESDD) the composition is skewed to acidic residues.

The protein resides in the nucleus. Functionally, transcriptional regulator required for the maintenance of the plant vegetative phase. May prevent the early activation of the vegetative-to-reproductive transition by regulating key genes that contribute to flower timing. The chain is Homeobox-DDT domain protein RLT3 from Arabidopsis thaliana (Mouse-ear cress).